Here is a 351-residue protein sequence, read N- to C-terminus: Mannonate dehydratase (351 aa).

This sequence belongs to the mannonate dehydratase family. The cofactor is Fe(2+). Requires Mn(2+) as cofactor.

It catalyses the reaction D-mannonate = 2-dehydro-3-deoxy-D-gluconate + H2O. The protein operates within carbohydrate metabolism; pentose and glucuronate interconversion. Catalyzes the dehydration of D-mannonate. The sequence is that of Mannonate dehydratase from Clostridium acetobutylicum (strain ATCC 824 / DSM 792 / JCM 1419 / IAM 19013 / LMG 5710 / NBRC 13948 / NRRL B-527 / VKM B-1787 / 2291 / W).